Reading from the N-terminus, the 314-residue chain is BTB/POZ domain-containing protein KCTD17 (314 aa).

The BTB domain occupies 24-94 (KWVRLNVGGT…LRHGKLVLDK (71 aa)). A disordered region spans residues 190–268 (STPNGLSSES…PAGGSRPHPL (79 aa)). Residues 196 to 239 (SSESSRKTKSTEEQLEEQQQQEEEVEEVEVEQVQVEADAQEKAQ) are a coiled coil. Acidic residues predominate over residues 208–225 (EQLEEQQQQEEEVEEVEV).

In terms of assembly, homopentamer; forms a closed pentamer. Interacts with CUL3; interaction is direct and forms a 5:5 heterodecamer. Interacts with TCHP. Interacts with CUL3, as part of the BCR(KCTD17) E3 ubiquitin ligase complex, at least composed of CUL3, KCTD17 and RBX1. In terms of tissue distribution, highly expressed in brain. Highest expression is observed in the putamen and the thalamus.

It localises to the cytoplasm. Its function is as follows. Substrate-adapter for CUL3-RING ubiquitin ligase complexes which mediates the ubiquitination and subsequent proteasomal degradation of TCHP, a protein involved in ciliogenesis down-regulation. Thereby, positively regulates ciliogenesis, playing a crucial role in the initial steps of axoneme extension. May also play a role in endoplasmic reticulum calcium ion homeostasis. This Homo sapiens (Human) protein is BTB/POZ domain-containing protein KCTD17.